The chain runs to 409 residues: Elongation factor Tu (409 aa).

Residues 10–214 enclose the tr-type G domain; sequence KPHVNIGTIG…AVDSYIPTPE (205 aa). The tract at residues 19–26 is G1; it reads GHVDHGKT. Position 19-26 (19-26) interacts with GTP; the sequence is GHVDHGKT. Residue Thr26 coordinates Mg(2+). The segment at 60 to 64 is G2; sequence GITIN. Positions 81–84 are G3; it reads DCPG. GTP-binding positions include 81–85 and 136–139; these read DCPGH and NKKD. Residues 136 to 139 form a G4 region; it reads NKKD. The tract at residues 174–176 is G5; that stretch reads SAK.

Belongs to the TRAFAC class translation factor GTPase superfamily. Classic translation factor GTPase family. EF-Tu/EF-1A subfamily. Monomer.

It localises to the cytoplasm. The catalysed reaction is GTP + H2O = GDP + phosphate + H(+). GTP hydrolase that promotes the GTP-dependent binding of aminoacyl-tRNA to the A-site of ribosomes during protein biosynthesis. This Microcystis aeruginosa (strain NIES-843 / IAM M-2473) protein is Elongation factor Tu.